The primary structure comprises 56 residues: uncharacterized protein (56 aa).

The segment at 15–56 (SIGNISSGNINNSIGNSSSSGCDDVFNNSTNNNNNNNNNNNK) is disordered.

This is an uncharacterized protein from Dictyostelium discoideum (Social amoeba).